The primary structure comprises 280 residues: Ribonuclease Z (280 aa).

The Zn(2+) site is built by His61, His63, Asp65, His66, His153, Asp176, and His240. The active-site Proton acceptor is Asp65.

This sequence belongs to the RNase Z family. In terms of assembly, homodimer. Zn(2+) serves as cofactor.

It catalyses the reaction Endonucleolytic cleavage of RNA, removing extra 3' nucleotides from tRNA precursor, generating 3' termini of tRNAs. A 3'-hydroxy group is left at the tRNA terminus and a 5'-phosphoryl group is left at the trailer molecule.. In terms of biological role, zinc phosphodiesterase, which displays some tRNA 3'-processing endonuclease activity. Probably involved in tRNA maturation, by removing a 3'-trailer from precursor tRNA. The polypeptide is Ribonuclease Z (Mycobacterium avium (strain 104)).